Here is a 61-residue protein sequence, read N- to C-terminus: Protein MATERNALLY EXPRESSED GENE 6 (61 aa).

Cysteine 38 and cysteine 60 are joined by a disulfide.

It belongs to the MEG family. As to expression, ubiquitous.

This chain is Protein MATERNALLY EXPRESSED GENE 6 (MEG6), found in Zea mays (Maize).